Reading from the N-terminus, the 391-residue chain is Succinyl-diaminopimelate desuccinylase (391 aa).

Histidine 67 lines the Zn(2+) pocket. Aspartate 69 is an active-site residue. Aspartate 101 serves as a coordination point for Zn(2+). Catalysis depends on glutamate 135, which acts as the Proton acceptor. Zn(2+)-binding residues include glutamate 136, glutamate 164, and histidine 353.

It belongs to the peptidase M20A family. DapE subfamily. Homodimer. Requires Zn(2+) as cofactor. The cofactor is Co(2+).

The enzyme catalyses N-succinyl-(2S,6S)-2,6-diaminopimelate + H2O = (2S,6S)-2,6-diaminopimelate + succinate. The protein operates within amino-acid biosynthesis; L-lysine biosynthesis via DAP pathway; LL-2,6-diaminopimelate from (S)-tetrahydrodipicolinate (succinylase route): step 3/3. Its function is as follows. Catalyzes the hydrolysis of N-succinyl-L,L-diaminopimelic acid (SDAP), forming succinate and LL-2,6-diaminopimelate (DAP), an intermediate involved in the bacterial biosynthesis of lysine and meso-diaminopimelic acid, an essential component of bacterial cell walls. The sequence is that of Succinyl-diaminopimelate desuccinylase from Rickettsia bellii (strain OSU 85-389).